A 631-amino-acid polypeptide reads, in one-letter code: Phosphomethylpyrimidine synthase (631 aa).

Residues Asn-239, Met-268, Tyr-297, His-333, 353 to 355, 394 to 397, and Glu-433 each bind substrate; these read SRG and DGLR. Residue His-437 coordinates Zn(2+). Tyr-460 lines the substrate pocket. His-501 lines the Zn(2+) pocket. [4Fe-4S] cluster-binding residues include Cys-581, Cys-584, and Cys-589.

Belongs to the ThiC family. Homodimer. [4Fe-4S] cluster serves as cofactor.

The catalysed reaction is 5-amino-1-(5-phospho-beta-D-ribosyl)imidazole + S-adenosyl-L-methionine = 4-amino-2-methyl-5-(phosphooxymethyl)pyrimidine + CO + 5'-deoxyadenosine + formate + L-methionine + 3 H(+). Its pathway is cofactor biosynthesis; thiamine diphosphate biosynthesis. In terms of biological role, catalyzes the synthesis of the hydroxymethylpyrimidine phosphate (HMP-P) moiety of thiamine from aminoimidazole ribotide (AIR) in a radical S-adenosyl-L-methionine (SAM)-dependent reaction. In Salmonella schwarzengrund (strain CVM19633), this protein is Phosphomethylpyrimidine synthase.